The sequence spans 187 residues: MAILKWKLKRSTVQEVSIAGPASYSTTTSTQASTAVSCSASEECVQAPPCKRQRGPSRPIGNPQNTQSIVCVTDYDTLDSANNNINVNHYNNNKGRDNSYCAATPIVQLQGDSNCLKCFRYRLHEKYKDLFLLASSTWHWTAPNNSQKHALVTLTYVNEQQRQDFLKTVKIPPTITHKLGFMSLQLL.

The protein belongs to the papillomaviridae E8^E2C protein family.

It is found in the host nucleus. Its function is as follows. Plays a role in limiting the replication of viral DNA in keratinocytes. Recruits the host NCoR/SMRT complex to viral replication foci to mediate repression of both viral replication and transcription. This is Protein E8^E2C from Human papillomavirus 13.